The sequence spans 110 residues: NADH-quinone oxidoreductase subunit K (110 aa).

3 consecutive transmembrane segments (helical) span residues 14-34 (VSQY…GMMV), 39-59 (ITIL…FVGI), and 70-90 (IFAL…LGII).

This sequence belongs to the complex I subunit 4L family. NDH-1 is composed of 14 different subunits. Subunits NuoA, H, J, K, L, M, N constitute the membrane sector of the complex.

It is found in the cell inner membrane. The catalysed reaction is a quinone + NADH + 5 H(+)(in) = a quinol + NAD(+) + 4 H(+)(out). Its function is as follows. NDH-1 shuttles electrons from NADH, via FMN and iron-sulfur (Fe-S) centers, to quinones in the respiratory chain. The immediate electron acceptor for the enzyme in this species is believed to be ubiquinone. Couples the redox reaction to proton translocation (for every two electrons transferred, four hydrogen ions are translocated across the cytoplasmic membrane), and thus conserves the redox energy in a proton gradient. The protein is NADH-quinone oxidoreductase subunit K of Hydrogenobaculum sp. (strain Y04AAS1).